A 265-amino-acid chain; its full sequence is Cytosolic Fe-S cluster assembly factor NUBP2 homolog (265 aa).

ATP is bound at residue 22–29; the sequence is GKGGVGKS. [4Fe-4S] cluster contacts are provided by Cys196 and Cys199.

Belongs to the Mrp/NBP35 ATP-binding proteins family. NUBP2/CFD1 subfamily. In terms of assembly, heterotetramer of 2 NUBP1 and 2 NUBP2 chains. [4Fe-4S] cluster is required as a cofactor.

The protein resides in the cytoplasm. In terms of biological role, component of the cytosolic iron-sulfur (Fe/S) protein assembly (CIA) machinery. Required for maturation of extramitochondrial Fe-S proteins. The NUBP1-NUBP2 heterotetramer forms a Fe-S scaffold complex, mediating the de novo assembly of an Fe-S cluster and its transfer to target apoproteins. The chain is Cytosolic Fe-S cluster assembly factor NUBP2 homolog from Trichoplax adhaerens (Trichoplax reptans).